A 1418-amino-acid chain; its full sequence is Ankyrin repeat and fibronectin type-III domain-containing protein 1 (1418 aa).

A disordered region spans residues 119 to 236 (RDSVCSLPPP…DRGETPSLSE (118 aa)). The segment covering 144–154 (PENTSINLSQC) has biased composition (polar residues). Residues 171-186 (SASPTSSTPLRTTSTP) are compositionally biased toward low complexity. Over residues 223-236 (LRDHDRGETPSLSE) the composition is skewed to basic and acidic residues. ANK repeat units follow at residues 419-450 (QSSEALFEAVEQQDLDAVQILLFQYTADELDL) and 456-485 (EGLTPLDISIMTNNVPIAKLLLKAGGKESP). The 97-residue stretch at 556-652 (APLMVRLSVT…LSQPPSAVPS (97 aa)) folds into the Fibronectin type-III domain. The tract at residues 893–900 (GLYLGYLK) is highly conserved peptide sequence. Disordered regions lie at residues 1134–1179 (VQKN…EVFL), 1321–1343 (LETPLSIPHSPTTSYSLDEYRQP), and 1361–1418 (KTSP…SSTL). The segment covering 1136-1146 (KNDSTSSNTDY) has biased composition (polar residues). Positions 1407-1418 (NEQVSEILSSTL) are enriched in polar residues.

Required for vestibular-related functions. The polypeptide is Ankyrin repeat and fibronectin type-III domain-containing protein 1 (ankfn1) (Danio rerio (Zebrafish)).